Consider the following 215-residue polypeptide: Adenylate kinase (215 aa).

10–15 (GAGKGT) provides a ligand contact to ATP. The tract at residues 30 to 59 (STGDMFRKAIKEETELGKEAKSYMDRGELV) is NMP. AMP is bound by residues Thr31, Arg36, 57-59 (ELV), 85-88 (GFPR), and Gln92. Residues 126 to 163 (GRRICESCGTTYHLVFNPPKVEGICDIDGGKLYQREDD) are LID. Arg127 serves as a coordination point for ATP. Residues Cys130 and Cys133 each contribute to the Zn(2+) site. 136-137 (TY) is a binding site for ATP. Zn(2+) is bound by residues Cys150 and Asp153. 2 residues coordinate AMP: Arg160 and Arg171. Lys199 serves as a coordination point for ATP.

It belongs to the adenylate kinase family. In terms of assembly, monomer.

It is found in the cytoplasm. It carries out the reaction AMP + ATP = 2 ADP. The protein operates within purine metabolism; AMP biosynthesis via salvage pathway; AMP from ADP: step 1/1. Catalyzes the reversible transfer of the terminal phosphate group between ATP and AMP. Plays an important role in cellular energy homeostasis and in adenine nucleotide metabolism. This Staphylococcus aureus (strain COL) protein is Adenylate kinase.